Reading from the N-terminus, the 269-residue chain is Small ribosomal subunit protein uS3 (269 aa).

The region spanning 38–106 is the KH type-2 domain; sequence IREWLHKNLE…QIQLNILEVK (69 aa). A disordered region spans residues 215–269; sequence AQKAARQAAQGGRGGRGGNRRGRGDRPDRRGGRRRAEAAKQSAETPAPQTENAGA. Over residues 236 to 252 the composition is skewed to basic and acidic residues; that stretch reads GRGDRPDRRGGRRRAEA. Residues 256–269 are compositionally biased toward polar residues; the sequence is SAETPAPQTENAGA.

It belongs to the universal ribosomal protein uS3 family. In terms of assembly, part of the 30S ribosomal subunit. Forms a tight complex with proteins S10 and S14.

Binds the lower part of the 30S subunit head. Binds mRNA in the 70S ribosome, positioning it for translation. The protein is Small ribosomal subunit protein uS3 of Cutibacterium acnes (strain DSM 16379 / KPA171202) (Propionibacterium acnes).